Reading from the N-terminus, the 257-residue chain is Expansin-A10 (257 aa).

An N-terminal signal peptide occupies residues 1-18; it reads MAPCLLLVLFLLPALATG. An Expansin-like EG45 domain is found at 50-163; it reads GGACGFGDLG…RRVNCLRDGG (114 aa). An Expansin-like CBD domain is found at 173-252; it reads FFLTVLISNV…EWDFGKTYTG (80 aa).

It belongs to the expansin family. Expansin A subfamily. Expressed in panicles and flowers.

It is found in the secreted. The protein resides in the cell wall. It localises to the membrane. Its function is as follows. May cause loosening and extension of plant cell walls by disrupting non-covalent bonding between cellulose microfibrils and matrix glucans. No enzymatic activity has been found. May be required for rapid internodal elongation in deepwater rice during submergence. The sequence is that of Expansin-A10 (EXPA10) from Oryza sativa subsp. japonica (Rice).